The sequence spans 248 residues: 3-oxoacyl-[acyl-carrier-protein] reductase FabG (248 aa).

NADP(+) is bound by residues 14-17, 65-66, and Asn-92; these read GGSR and DV. Ser-144 is a binding site for substrate. Tyr-157 (proton acceptor) is an active-site residue. Residues 157–161 and Ile-190 each bind NADP(+); that span reads YAAAK.

This sequence belongs to the short-chain dehydrogenases/reductases (SDR) family. Homotetramer.

The enzyme catalyses a (3R)-hydroxyacyl-[ACP] + NADP(+) = a 3-oxoacyl-[ACP] + NADPH + H(+). Its pathway is lipid metabolism; fatty acid biosynthesis. Catalyzes the NADPH-dependent reduction of beta-ketoacyl-ACP substrates to beta-hydroxyacyl-ACP products, the first reductive step in the elongation cycle of fatty acid biosynthesis. The polypeptide is 3-oxoacyl-[acyl-carrier-protein] reductase FabG (fabG) (Chlamydia muridarum (strain MoPn / Nigg)).